The primary structure comprises 549 residues: Glucose-6-phosphate isomerase (549 aa).

The active-site Proton donor is E355. Catalysis depends on residues H387 and K515.

The protein belongs to the GPI family.

It is found in the cytoplasm. It carries out the reaction alpha-D-glucose 6-phosphate = beta-D-fructose 6-phosphate. It participates in carbohydrate biosynthesis; gluconeogenesis. The protein operates within carbohydrate degradation; glycolysis; D-glyceraldehyde 3-phosphate and glycerone phosphate from D-glucose: step 2/4. In terms of biological role, catalyzes the reversible isomerization of glucose-6-phosphate to fructose-6-phosphate. This is Glucose-6-phosphate isomerase from Mannheimia succiniciproducens (strain KCTC 0769BP / MBEL55E).